A 235-amino-acid chain; its full sequence is Thiamine import ATP-binding protein ThiQ (235 aa).

Residues 2–230 (LKLIDITWLY…QASASALLGI (229 aa)) form the ABC transporter domain. Position 32–39 (32–39 (GPSGAGKS)) interacts with ATP.

Belongs to the ABC transporter superfamily. Thiamine importer (TC 3.A.1.19.1) family. The complex is composed of two ATP-binding proteins (ThiQ), two transmembrane proteins (ThiP) and a solute-binding protein (ThiB).

Its subcellular location is the cell inner membrane. It catalyses the reaction thiamine(out) + ATP + H2O = thiamine(in) + ADP + phosphate + H(+). Its function is as follows. Part of the ABC transporter complex ThiBPQ involved in thiamine import. Responsible for energy coupling to the transport system. The protein is Thiamine import ATP-binding protein ThiQ of Salmonella choleraesuis (strain SC-B67).